The primary structure comprises 602 residues: MSESDTTDAGDGTALRTPIVAVLGHVDHGKTSLLDEVRGSAVTAGEAGAITQHIGATAVPLDTISELAGQLVSPEDFDLPGLLFIDTPGHHSFSTLRSRGGALADIAILVVDVNDGFQPQSYEALDILKRTQTPFIVAANKIDTVPGWNPNPDEPVQRTLEAQSDRAESRLNEQLYEIIGELSDEGFSADMYWRVQNFRENIGVVPVSAETGEGVPDLLTVLMGLSQRYLKEEMSIDVGGPGVGTVLEVKEERGFGTTLDIVLYDGTIRADDTIVVGGKNETIVTDVRALLQPQPLAEIRTEKQFEQVEAVGAAAGIKIAAPDLDDAMAGAPVRVVRDRPVEEVIAEVEAELADIQVVTEEEGIVVKADTLGSLEAIAAALEEAEIPIVRAEVGDVAPRDIAVASTAEEPKHEAVLAFNVDVLDDAEREAEEKDVKLFADDVIYQLVEEYDDYVTEIEEAQQEQILDKIERPCRFRVLKDHVFRQSNPAVVGVEVLSGTLKRNSRVVKWDGNEPERVGELKSLQDAGDDIDEARTGEQVAASIDGPTVGRQIEEGDELWAEVPEKHAKILEQELADEIPTDELEALRMYLDKQRKRDPFWGK.

Residues Leu-15–Leu-230 form the tr-type G domain. Positions Gly-24 to Thr-31 are G1. Residue Gly-24 to Thr-31 participates in GTP binding. Residues Ala-49–His-53 form a G2 region. A G3 region spans residues Asp-86–Gly-89. GTP is bound by residues Asp-86 to His-90 and Asn-140 to Asp-143. The tract at residues Asn-140–Asp-143 is G4. The G5 stretch occupies residues Ser-208–Glu-210.

Belongs to the TRAFAC class translation factor GTPase superfamily. Classic translation factor GTPase family. IF-2 subfamily.

In terms of biological role, function in general translation initiation by promoting the binding of the formylmethionine-tRNA to ribosomes. Seems to function along with eIF-2. The chain is Probable translation initiation factor IF-2 from Natronomonas pharaonis (strain ATCC 35678 / DSM 2160 / CIP 103997 / JCM 8858 / NBRC 14720 / NCIMB 2260 / Gabara) (Halobacterium pharaonis).